Consider the following 311-residue polypeptide: Cathepsin B (311 aa).

An N-terminal signal peptide occupies residues 1 to 19; it reads MRVLLSLVVILFIINSAFA. A propeptide spanning residues 20–78 is cleaved from the precursor; the sequence is VKINIGRPTKSHKTIHHETWVEEQTDQFDNIKVGQLLGFKRSPNRPKLQIKSYDPLGVQ. A glycan (N-linked (GlcNAc...) asparagine) is linked at Asn91. Cystine bridges form between Cys92/Cys121, Cys104/Cys145, Cys138/Cys191, Cys167/Cys195, and Cys175/Cys182. Cys107 is an active-site residue. Asn198 carries an N-linked (GlcNAc...) asparagine glycan. Active-site residues include His261 and Asn281. Asn290 carries N-linked (GlcNAc...) asparagine glycosylation.

Belongs to the peptidase C1 family.

The protein resides in the lysosome. It carries out the reaction Hydrolysis of proteins with broad specificity for peptide bonds. Preferentially cleaves -Arg-Arg-|-Xaa bonds in small molecule substrates (thus differing from cathepsin L). In addition to being an endopeptidase, shows peptidyl-dipeptidase activity, liberating C-terminal dipeptides.. Thiol protease which is believed to participate in intracellular degradation and turnover of proteins. This is Cathepsin B (ctsB) from Dictyostelium discoideum (Social amoeba).